The following is a 107-amino-acid chain: Nucleoid-associated protein RF_1365 (107 aa).

It belongs to the YbaB/EbfC family. As to quaternary structure, homodimer.

It is found in the cytoplasm. Its subcellular location is the nucleoid. In terms of biological role, binds to DNA and alters its conformation. May be involved in regulation of gene expression, nucleoid organization and DNA protection. The protein is Nucleoid-associated protein RF_1365 of Rickettsia felis (strain ATCC VR-1525 / URRWXCal2) (Rickettsia azadi).